We begin with the raw amino-acid sequence, 569 residues long: Laccase-6 (569 aa).

An N-terminal signal peptide occupies residues 1–29 (MTSSAVPSLFRLSFLLFTLQVMNIGRIGA). 2 consecutive Plastocyanin-like domains span residues 37–153 (KVQT…PKAS) and 163–315 (NEHT…YIGA). N83 is a glycosylation site (N-linked (GlcNAc...) asparagine). Cu cation contacts are provided by H87, H89, H132, and H134. N208, N303, N319, N392, N438, and N444 each carry an N-linked (GlcNAc...) asparagine glycan. The Plastocyanin-like 3 domain maps to 417–553 (DFPTTPEKAY…STMFIVKNGK (137 aa)). Cu cation-binding residues include H472, H475, H477, H532, C533, H534, H538, and M543.

Belongs to the multicopper oxidase family. Requires Cu cation as cofactor. As to expression, predominantly expressed in the inflorescence stem, but not in siliques.

It localises to the secreted. The protein resides in the extracellular space. It is found in the apoplast. It carries out the reaction 4 hydroquinone + O2 = 4 benzosemiquinone + 2 H2O. In terms of biological role, lignin degradation and detoxification of lignin-derived products. This chain is Laccase-6 (LAC6), found in Arabidopsis thaliana (Mouse-ear cress).